The sequence spans 159 residues: Ribosome maturation factor RimP (159 aa).

Belongs to the RimP family.

Its subcellular location is the cytoplasm. In terms of biological role, required for maturation of 30S ribosomal subunits. The protein is Ribosome maturation factor RimP of Geotalea daltonii (strain DSM 22248 / JCM 15807 / FRC-32) (Geobacter daltonii).